The sequence spans 226 residues: UPF0111 protein HI_1603 (226 aa).

The protein belongs to the UPF0111 family.

The chain is UPF0111 protein HI_1603 from Haemophilus influenzae (strain ATCC 51907 / DSM 11121 / KW20 / Rd).